The chain runs to 118 residues: Myotrophin (118 aa).

3 ANK repeats span residues 1–30 (MGDK…DVNR), 34–65 (GGRK…NAPD), and 67–98 (HGIT…NRKG).

Belongs to the myotrophin family.

It localises to the cytoplasm. Its subcellular location is the nucleus. The protein resides in the perinuclear region. In terms of biological role, regulates NF-kappa-B transcription factor activity. Promotes growth of cardiomyocytes, but not cardiomyocyte proliferation. Promotes cardiac muscle hypertrophy. Plays a role in the regulation of the growth of actin filaments. Inhibits the activity of the F-actin-capping protein complex. In Danio rerio (Zebrafish), this protein is Myotrophin (mtpn).